The chain runs to 217 residues: Peptide methionine sulfoxide reductase MsrA (217 aa).

The segment at 16–39 (EALKGGRHPVLESPQPHTVLGTPI) is disordered. The active site involves cysteine 56.

This sequence belongs to the MsrA Met sulfoxide reductase family.

The enzyme catalyses L-methionyl-[protein] + [thioredoxin]-disulfide + H2O = L-methionyl-(S)-S-oxide-[protein] + [thioredoxin]-dithiol. It catalyses the reaction [thioredoxin]-disulfide + L-methionine + H2O = L-methionine (S)-S-oxide + [thioredoxin]-dithiol. Has an important function as a repair enzyme for proteins that have been inactivated by oxidation. Catalyzes the reversible oxidation-reduction of methionine sulfoxide in proteins to methionine. In Corynebacterium efficiens (strain DSM 44549 / YS-314 / AJ 12310 / JCM 11189 / NBRC 100395), this protein is Peptide methionine sulfoxide reductase MsrA.